Consider the following 377-residue polypeptide: uncharacterized protein (377 aa).

2 helical membrane-spanning segments follow: residues leucine 23–tyrosine 43 and glycine 251–tyrosine 271.

It localises to the cell membrane. This is an uncharacterized protein from Methanocaldococcus jannaschii (strain ATCC 43067 / DSM 2661 / JAL-1 / JCM 10045 / NBRC 100440) (Methanococcus jannaschii).